A 401-amino-acid chain; its full sequence is Bifunctional D-cysteine desulfhydrase/1-aminocyclopropane-1-carboxylate deaminase, mitochondrial (401 aa).

A mitochondrion-targeting transit peptide spans 1-37 (MRGRSLTLSRVKLELARRSMSATSVPSMADFLTKKPY). The residue at position 2 (Arg2) is an N-acetylserine. Lys93 is subject to N6-(pyridoxal phosphate)lysine. Residue Ser120 is the Nucleophile of the active site.

Belongs to the ACC deaminase/D-cysteine desulfhydrase family. Pyridoxal 5'-phosphate serves as cofactor. Highly expressed in stems and cauline leaves, and at lower levels in roots, rosette leaves and flowers.

It is found in the mitochondrion. It catalyses the reaction D-cysteine + H2O = hydrogen sulfide + pyruvate + NH4(+) + H(+). The catalysed reaction is 1-aminocyclopropane-1-carboxylate + H2O = 2-oxobutanoate + NH4(+). In terms of biological role, catalyzes the production of hydrogen sulfide (H2S) from cysteine. Is mainly responsible for the degradation of cysteine to generate H2S, a regulator of stomatal movement and closure. Has high affinity for D-cysteine. Possesses 1-aminocyclopropane-1-carboxylic acid (ACC) deaminase activity. Acts as a regulator of ACC levels and causes changes in ethylene levels. The sequence is that of Bifunctional D-cysteine desulfhydrase/1-aminocyclopropane-1-carboxylate deaminase, mitochondrial (DCD) from Arabidopsis thaliana (Mouse-ear cress).